We begin with the raw amino-acid sequence, 295 residues long: Structure-specific endonuclease subunit SLX1 (295 aa).

Positions 11–93 constitute a GIY-YIG domain; the sequence is EFYGVYILQS…QHPKTSRHMA (83 aa). The disordered stretch occupies residues 85 to 133; the sequence is HPKTSRHMAGGGGSVTATAETAKSAPVAGKSDATSPAKNRRNAAPVARS. The SLX1-type zinc-finger motif lies at 205–272; that stretch reads CCLCSDAIDY…IPSDVSCSQC (68 aa).

Belongs to the SLX1 family. Forms a heterodimer with SLX4. Requires a divalent metal cation as cofactor.

It is found in the nucleus. Functionally, catalytic subunit of the SLX1-SLX4 structure-specific endonuclease that resolves DNA secondary structures generated during DNA repair and recombination. Has endonuclease activity towards branched DNA substrates, introducing single-strand cuts in duplex DNA close to junctions with ss-DNA. The sequence is that of Structure-specific endonuclease subunit SLX1 from Meyerozyma guilliermondii (strain ATCC 6260 / CBS 566 / DSM 6381 / JCM 1539 / NBRC 10279 / NRRL Y-324) (Yeast).